A 239-amino-acid polypeptide reads, in one-letter code: Phosphoribosylaminoimidazole-succinocarboxamide synthase (239 aa).

The protein belongs to the SAICAR synthetase family.

The enzyme catalyses 5-amino-1-(5-phospho-D-ribosyl)imidazole-4-carboxylate + L-aspartate + ATP = (2S)-2-[5-amino-1-(5-phospho-beta-D-ribosyl)imidazole-4-carboxamido]succinate + ADP + phosphate + 2 H(+). It participates in purine metabolism; IMP biosynthesis via de novo pathway; 5-amino-1-(5-phospho-D-ribosyl)imidazole-4-carboxamide from 5-amino-1-(5-phospho-D-ribosyl)imidazole-4-carboxylate: step 1/2. The chain is Phosphoribosylaminoimidazole-succinocarboxamide synthase from Psychrobacter sp. (strain PRwf-1).